We begin with the raw amino-acid sequence, 299 residues long: Apolipoprotein E (299 aa).

Residues methionine 1–alanine 18 form the signal peptide. Residues valine 74–glutamate 245 are 8 X 22 AA approximate tandem repeats. A run of 8 repeats spans residues leucine 75–valine 95, proline 96–glycine 117, alanine 118–glycine 139, glutamine 140–leucine 161, arginine 162–glutamate 183, arginine 184–leucine 206, threonine 207–arginine 225, and glycine 224–glutamate 242. A Methionine sulfoxide modification is found at methionine 137. Position 141 is a phosphoserine (serine 141). The segment at histidine 152 to arginine 162 is LDL and other lipoprotein receptors binding. Leucine 156 to arginine 159 is a binding site for heparin. The tract at residues alanine 205 to methionine 273 is lipid-binding and lipoprotein association. Heparin is bound at residue glycine 219–leucine 226. Positions arginine 261 to methionine 273 are specificity for association with VLDL.

This sequence belongs to the apolipoprotein A1/A4/E family. Homotetramer. May interact with ABCA1; functionally associated with ABCA1 in the biogenesis of HDLs. May interact with APP/A4 amyloid-beta peptide; the interaction is extremely stable in vitro but its physiological significance is unclear. May interact with MAPT. May interact with MAP2. In the cerebrospinal fluid, interacts with secreted SORL1. Interacts with PMEL; this allows the loading of PMEL luminal fragment on ILVs to induce fibril nucleation. APOE exists as multiple glycosylated and sialylated glycoforms within cells and in plasma. The extent of glycosylation and sialylation are tissue and context specific. In terms of processing, glycated in plasma VLDL. Post-translationally, phosphorylated by FAM20C in the extracellular medium.

The protein resides in the secreted. The protein localises to the extracellular space. Its subcellular location is the extracellular matrix. It localises to the extracellular vesicle. It is found in the endosome. The protein resides in the multivesicular body. Functionally, APOE is an apolipoprotein, a protein associating with lipid particles, that mainly functions in lipoprotein-mediated lipid transport between organs via the plasma and interstitial fluids. APOE is a core component of plasma lipoproteins and is involved in their production, conversion and clearance. Apolipoproteins are amphipathic molecules that interact both with lipids of the lipoprotein particle core and the aqueous environment of the plasma. As such, APOE associates with chylomicrons, chylomicron remnants, very low density lipoproteins (VLDL) and intermediate density lipoproteins (IDL) but shows a preferential binding to high-density lipoproteins (HDL). It also binds a wide range of cellular receptors including the LDL receptor/LDLR, the LDL receptor-related proteins LRP1, LRP2 and LRP8 and the very low-density lipoprotein receptor/VLDLR that mediate the cellular uptake of the APOE-containing lipoprotein particles. Finally, APOE also has a heparin-binding activity and binds heparan-sulfate proteoglycans on the surface of cells, a property that supports the capture and the receptor-mediated uptake of APOE-containing lipoproteins by cells. A main function of APOE is to mediate lipoprotein clearance through the uptake of chylomicrons, VLDLs, and HDLs by hepatocytes. APOE is also involved in the biosynthesis by the liver of VLDLs as well as their uptake by peripheral tissues ensuring the delivery of triglycerides and energy storage in muscle, heart and adipose tissues. By participating in the lipoprotein-mediated distribution of lipids among tissues, APOE plays a critical role in plasma and tissues lipid homeostasis. APOE is also involved in two steps of reverse cholesterol transport, the HDLs-mediated transport of cholesterol from peripheral tissues to the liver, and thereby plays an important role in cholesterol homeostasis. First, it is functionally associated with ABCA1 in the biogenesis of HDLs in tissues. Second, it is enriched in circulating HDLs and mediates their uptake by hepatocytes. APOE also plays an important role in lipid transport in the central nervous system, regulating neuron survival and sprouting. This chain is Apolipoprotein E (Apoe), found in Tympanoctomys barrerae (Plains viscacha rat).